The primary structure comprises 361 residues: Tyrosine--tRNA ligase (361 aa).

The L-tyrosine site is built by Tyr36, Tyr162, Gln166, Asp169, and Gln184. The 'KMSKS' region motif lies at 235–239 (KMSKS). Lys238 provides a ligand contact to ATP.

Belongs to the class-I aminoacyl-tRNA synthetase family. TyrS type 4 subfamily. Homodimer.

The protein resides in the cytoplasm. The enzyme catalyses tRNA(Tyr) + L-tyrosine + ATP = L-tyrosyl-tRNA(Tyr) + AMP + diphosphate + H(+). In terms of biological role, catalyzes the attachment of tyrosine to tRNA(Tyr) in a two-step reaction: tyrosine is first activated by ATP to form Tyr-AMP and then transferred to the acceptor end of tRNA(Tyr). The polypeptide is Tyrosine--tRNA ligase (Sulfolobus acidocaldarius (strain ATCC 33909 / DSM 639 / JCM 8929 / NBRC 15157 / NCIMB 11770)).